Here is a 73-residue protein sequence, read N- to C-terminus: Neutrophil elastase 2B (73 aa).

In terms of domain architecture, Peptidase S1 spans 1–73 (IVGGRPARPH…SGGPLVCNGL (73 aa)). The active-site Charge relay system is Ser64.

This sequence belongs to the peptidase S1 family. Elastase subfamily.

May be involved in the degradation of connective tissue in chronic lung disease. In Equus caballus (Horse), this protein is Neutrophil elastase 2B.